The primary structure comprises 538 residues: Chaperonin GroEL (538 aa).

Residues 29–32 (TIGP), 86–90 (DGTTT), glycine 413, 476–478 (NAA), and aspartate 492 each bind ATP.

The protein belongs to the chaperonin (HSP60) family. As to quaternary structure, forms a cylinder of 14 subunits composed of two heptameric rings stacked back-to-back. Interacts with the co-chaperonin GroES.

The protein localises to the cytoplasm. The catalysed reaction is ATP + H2O + a folded polypeptide = ADP + phosphate + an unfolded polypeptide.. Its function is as follows. Together with its co-chaperonin GroES, plays an essential role in assisting protein folding. The GroEL-GroES system forms a nano-cage that allows encapsulation of the non-native substrate proteins and provides a physical environment optimized to promote and accelerate protein folding. The sequence is that of Chaperonin GroEL from Staphylococcus aureus (strain Mu3 / ATCC 700698).